We begin with the raw amino-acid sequence, 152 residues long: Probable methionine-R-sulfoxide reductase B (152 aa).

Residues 27–151 form the MsrB domain; the sequence is QTEWKSVLPN…NSVCMAFEKK (125 aa). 4 residues coordinate Zn(2+): Cys-66, Cys-69, Cys-116, and Cys-119. The active-site Nucleophile is Cys-140.

The protein belongs to the MsrB Met sulfoxide reductase family. Zn(2+) is required as a cofactor.

The enzyme catalyses L-methionyl-[protein] + [thioredoxin]-disulfide + H2O = L-methionyl-(R)-S-oxide-[protein] + [thioredoxin]-dithiol. Methionine-sulfoxide reductase that specifically reduces methionine (R)-sulfoxide back to methionine. While in many cases, methionine oxidation is the result of random oxidation following oxidative stress, methionine oxidation is also a post-translational modification that takes place on specific residue. This is Probable methionine-R-sulfoxide reductase B from Caenorhabditis elegans.